The chain runs to 402 residues: Deoxyguanosinetriphosphate triphosphohydrolase-like protein (402 aa).

The HD domain occupies 73 to 217; the sequence is RLTHTIEVAQ…AAIADDIAYN (145 aa).

The protein belongs to the dGTPase family. Type 2 subfamily.

The polypeptide is Deoxyguanosinetriphosphate triphosphohydrolase-like protein (Brucella anthropi (strain ATCC 49188 / DSM 6882 / CCUG 24695 / JCM 21032 / LMG 3331 / NBRC 15819 / NCTC 12168 / Alc 37) (Ochrobactrum anthropi)).